The sequence spans 113 residues: Large ribosomal subunit protein bL17 (113 aa).

Belongs to the bacterial ribosomal protein bL17 family. In terms of assembly, part of the 50S ribosomal subunit. Contacts protein L32.

The polypeptide is Large ribosomal subunit protein bL17 (Clostridioides difficile (strain 630) (Peptoclostridium difficile)).